The sequence spans 298 residues: Protoheme IX farnesyltransferase (298 aa).

9 helical membrane-spanning segments follow: residues 29 to 49 (LIVF…PPLL), 51 to 71 (FGVA…LNCL), 97 to 117 (ETVT…HGFI), 120 to 140 (LTMW…TLIL), 148 to 168 (IVIG…AMTG), 175 to 195 (LVLF…LACY), 221 to 241 (ILWY…LGMS), 243 to 263 (GFYL…AIAL), and 278 to 298 (YSIL…LIVL).

It belongs to the UbiA prenyltransferase family. Protoheme IX farnesyltransferase subfamily.

The protein resides in the cell inner membrane. The catalysed reaction is heme b + (2E,6E)-farnesyl diphosphate + H2O = Fe(II)-heme o + diphosphate. It participates in porphyrin-containing compound metabolism; heme O biosynthesis; heme O from protoheme: step 1/1. In terms of biological role, converts heme B (protoheme IX) to heme O by substitution of the vinyl group on carbon 2 of heme B porphyrin ring with a hydroxyethyl farnesyl side group. The sequence is that of Protoheme IX farnesyltransferase from Dechloromonas aromatica (strain RCB).